The primary structure comprises 167 residues: Beta-3 adrenergic receptor (167 aa).

Residues Arg1–Pro25 are Extracellular-facing. Cys11 and Cys17 are disulfide-bonded. A helical transmembrane segment spans residues Tyr26–Ala47. At Arg48 to Arg114 the chain is on the cytoplasmic side. Residues Arg66 to Cys97 form a disordered region. A helical membrane pass occupies residues Thr115–Leu136. Residues Arg137 to Gly148 are Extracellular-facing. Residues Val149–Ile167 form a helical membrane-spanning segment.

This sequence belongs to the G-protein coupled receptor 1 family. Adrenergic receptor subfamily. ADRB3 sub-subfamily. Interacts with ARRDC3.

The protein resides in the cell membrane. Its function is as follows. Beta-adrenergic receptors mediate the catecholamine-induced activation of adenylate cyclase through the action of G proteins. Beta-3 is involved in the regulation of lipolysis and thermogenesis. This Meriones unguiculatus (Mongolian jird) protein is Beta-3 adrenergic receptor (ADRB3).